Reading from the N-terminus, the 201-residue chain is dITP/XTP pyrophosphatase (201 aa).

7 to 12 (SNNAHK) is a binding site for substrate. Catalysis depends on aspartate 72, which acts as the Proton acceptor. Position 72 (aspartate 72) interacts with Mg(2+). Residues serine 73, 154–157 (FGYD), lysine 177, and 182–183 (HR) each bind substrate.

It belongs to the HAM1 NTPase family. Homodimer. The cofactor is Mg(2+).

The catalysed reaction is XTP + H2O = XMP + diphosphate + H(+). The enzyme catalyses dITP + H2O = dIMP + diphosphate + H(+). It catalyses the reaction ITP + H2O = IMP + diphosphate + H(+). In terms of biological role, pyrophosphatase that catalyzes the hydrolysis of nucleoside triphosphates to their monophosphate derivatives, with a high preference for the non-canonical purine nucleotides XTP (xanthosine triphosphate), dITP (deoxyinosine triphosphate) and ITP. Seems to function as a house-cleaning enzyme that removes non-canonical purine nucleotides from the nucleotide pool, thus preventing their incorporation into DNA/RNA and avoiding chromosomal lesions. The sequence is that of dITP/XTP pyrophosphatase from Leuconostoc mesenteroides subsp. mesenteroides (strain ATCC 8293 / DSM 20343 / BCRC 11652 / CCM 1803 / JCM 6124 / NCDO 523 / NBRC 100496 / NCIMB 8023 / NCTC 12954 / NRRL B-1118 / 37Y).